Here is a 382-residue protein sequence, read N- to C-terminus: MGVCCSKGTGIIVEHGADDGNECGDGEAEVRDTNDGAVVRTRGSSKHVSMSIKQGKKGINQDAMTVWENFGGEEDTIFCGVFDGHGPMGHKISRHVCENLPSRVHSKIRSSKSAGDENIENNSSQSQEELFREFEDILVTFFKQIDSELGLDSPYDSFCSGTTAVTVFKQADCLVIANLGHSRAVLGTRSKNSFKAVQLTVDLKPCVQREAERIVSCKGRVFAMEEEPDVYRVWMPDDDCPGLAMSRAFGDFCLKDYGLVCIPDVFCRKVSREDEFVVLATDGIWDVLSNEEVVKVVGSCKDRSVAAEMLVQRAARTWRTKFPASKADDCAVVVLYLNHRPYPREGNVSRAISTISWRSNKSNNECYGAAPLSPLGLSQRVS.

In terms of domain architecture, PPM-type phosphatase spans 47-337 (HVSMSIKQGK…DDCAVVVLYL (291 aa)). The Mn(2+) site is built by Asp83 and Gly84. A disordered region spans residues 107-126 (KIRSSKSAGDENIENNSSQS). Positions 282 and 328 each coordinate Mn(2+).

This sequence belongs to the PP2C family. Mg(2+) is required as a cofactor. Requires Mn(2+) as cofactor.

It carries out the reaction O-phospho-L-seryl-[protein] + H2O = L-seryl-[protein] + phosphate. The catalysed reaction is O-phospho-L-threonyl-[protein] + H2O = L-threonyl-[protein] + phosphate. This is Probable protein phosphatase 2C 65 from Arabidopsis thaliana (Mouse-ear cress).